Reading from the N-terminus, the 172-residue chain is Translocon-associated protein subunit delta (172 aa).

The first 24 residues, 1–24 (MAALASLGALALLLLSGLSCCSEA), serve as a signal peptide directing secretion. A disulfide bond links C25 and C56. The Lumenal segment spans residues 25-143 (CVEPQITPSY…SVDHRGTWNG (119 aa)). A Glycyl lysine isopeptide (Lys-Gly) (interchain with G-Cter in ubiquitin) cross-link involves residue K72. The helical transmembrane segment at 144–164 (PWVSTEVLAAAIGLVIYYLAF) threads the bilayer. The Cytoplasmic portion of the chain corresponds to 165 to 172 (SAKSHIQA).

The protein belongs to the TRAP-delta family. In terms of assembly, heterotetramer of TRAP-alpha, TRAP-beta, TRAP-delta and TRAP-gamma.

It localises to the endoplasmic reticulum membrane. In terms of biological role, TRAP proteins are part of a complex whose function is to bind calcium to the ER membrane and thereby regulate the retention of ER resident proteins. This Bos taurus (Bovine) protein is Translocon-associated protein subunit delta (SSR4).